Here is a 310-residue protein sequence, read N- to C-terminus: GMP synthase [glutamine-hydrolyzing] subunit B (310 aa).

Residues 2-185 enclose the GMPS ATP-PPase domain; that stretch reads FDPKKFIDEA…LGLPDSIVYR (184 aa). Residue 29–35 coordinates ATP; sequence SGGVDSS.

In terms of assembly, heterodimer composed of a glutamine amidotransferase subunit (A) and a GMP-binding subunit (B).

It catalyses the reaction XMP + L-glutamine + ATP + H2O = GMP + L-glutamate + AMP + diphosphate + 2 H(+). The protein operates within purine metabolism; GMP biosynthesis; GMP from XMP (L-Gln route): step 1/1. Catalyzes the synthesis of GMP from XMP. The sequence is that of GMP synthase [glutamine-hydrolyzing] subunit B (guaAB) from Methanocaldococcus jannaschii (strain ATCC 43067 / DSM 2661 / JAL-1 / JCM 10045 / NBRC 100440) (Methanococcus jannaschii).